The primary structure comprises 281 residues: Endonuclease III-like protein 1 (281 aa).

A mitochondrion-targeting transit peptide spans 1-17 (MCAAAPRGGGRAARRLG). Positions 1-60 (MCAAAPRGGGRAARRLGAATAGSRVPSAAPRYSRRTRRVPIAYEAEPKPESPGPKWEPEN) are disordered. Positions 15-24 (RLGAATAGSR) are enriched in low complexity. One can recognise a HhH domain in the interval 168–192 (KYGGDIPGTVEELVKLPGVGPKMAH). Residue Lys-189 is the Nucleophile; for N-glycosylase activity of the active site. Positions 259, 266, 269, and 275 each coordinate [4Fe-4S] cluster.

The protein belongs to the Nth/MutY family. [4Fe-4S] cluster is required as a cofactor.

It is found in the nucleus. The protein localises to the mitochondrion. It carries out the reaction 2'-deoxyribonucleotide-(2'-deoxyribose 5'-phosphate)-2'-deoxyribonucleotide-DNA = a 3'-end 2'-deoxyribonucleotide-(2,3-dehydro-2,3-deoxyribose 5'-phosphate)-DNA + a 5'-end 5'-phospho-2'-deoxyribonucleoside-DNA + H(+). In terms of biological role, bifunctional DNA N-glycosylase with associated apurinic/apyrimidinic (AP) lyase function that catalyzes the first step in base excision repair (BER), the primary repair pathway for the repair of oxidative DNA damage. The DNA N-glycosylase activity releases the damaged DNA base from DNA by cleaving the N-glycosidic bond, leaving an AP site. The AP lyase activity cleaves the phosphodiester bond 3' to the AP site by a beta-elimination. Primarily recognizes and repairs oxidative base damage of pyrimidines. The polypeptide is Endonuclease III-like protein 1 (Gallus gallus (Chicken)).